Reading from the N-terminus, the 714-residue chain is Phosphoribosylformylglycinamidine synthase subunit PurL (714 aa).

Residue His-34 is part of the active site. Tyr-37 contributes to the ATP binding site. Mg(2+) is bound at residue Glu-78. Residues Ser-79–His-82 and Arg-101 each bind substrate. The active-site Proton acceptor is His-80. Asp-102 is a binding site for Mg(2+). Gln-226 provides a ligand contact to substrate. Asp-254 is a Mg(2+) binding site. Glu-298–Gln-300 is a binding site for substrate. 2 residues coordinate ATP: Asp-474 and Gly-511. Residue Asn-512 coordinates Mg(2+). Ser-514 is a binding site for substrate.

This sequence belongs to the FGAMS family. Monomer. Part of the FGAM synthase complex composed of 1 PurL, 1 PurQ and 2 PurS subunits.

Its subcellular location is the cytoplasm. It catalyses the reaction N(2)-formyl-N(1)-(5-phospho-beta-D-ribosyl)glycinamide + L-glutamine + ATP + H2O = 2-formamido-N(1)-(5-O-phospho-beta-D-ribosyl)acetamidine + L-glutamate + ADP + phosphate + H(+). It functions in the pathway purine metabolism; IMP biosynthesis via de novo pathway; 5-amino-1-(5-phospho-D-ribosyl)imidazole from N(2)-formyl-N(1)-(5-phospho-D-ribosyl)glycinamide: step 1/2. In terms of biological role, part of the phosphoribosylformylglycinamidine synthase complex involved in the purines biosynthetic pathway. Catalyzes the ATP-dependent conversion of formylglycinamide ribonucleotide (FGAR) and glutamine to yield formylglycinamidine ribonucleotide (FGAM) and glutamate. The FGAM synthase complex is composed of three subunits. PurQ produces an ammonia molecule by converting glutamine to glutamate. PurL transfers the ammonia molecule to FGAR to form FGAM in an ATP-dependent manner. PurS interacts with PurQ and PurL and is thought to assist in the transfer of the ammonia molecule from PurQ to PurL. The protein is Phosphoribosylformylglycinamidine synthase subunit PurL of Methanothermobacter thermautotrophicus (strain ATCC 29096 / DSM 1053 / JCM 10044 / NBRC 100330 / Delta H) (Methanobacterium thermoautotrophicum).